The sequence spans 340 residues: Myomesin-1 (340 aa).

Residues 177-212 (AEKARLKSRPSAPXTGQIIVTEEEPSEEAGTENXQR) are disordered. The span at 197–206 (TEEEPSEEAG) shows a compositional bias: acidic residues.

As to quaternary structure, homodimer. Interacts with TTN/titin and PNKD. In terms of tissue distribution, seems to be expressed in all cardiac and skeletal fibers.

It localises to the cytoplasm. The protein localises to the myofibril. It is found in the sarcomere. Its subcellular location is the m line. In terms of biological role, major component of the vertebrate myofibrillar M band. Binds myosin, titin, and light meromyosin. This binding is dose dependent. The chain is Myomesin-1 (MYOM1) from Bos taurus (Bovine).